The following is a 211-amino-acid chain: N-(5'-phosphoribosyl)anthranilate isomerase (211 aa).

The protein belongs to the TrpF family.

The enzyme catalyses N-(5-phospho-beta-D-ribosyl)anthranilate = 1-(2-carboxyphenylamino)-1-deoxy-D-ribulose 5-phosphate. The protein operates within amino-acid biosynthesis; L-tryptophan biosynthesis; L-tryptophan from chorismate: step 3/5. This Methanococcus maripaludis (strain DSM 14266 / JCM 13030 / NBRC 101832 / S2 / LL) protein is N-(5'-phosphoribosyl)anthranilate isomerase.